The primary structure comprises 106 residues: uncharacterized protein (106 aa).

Belongs to the HesB/IscA family.

This is an uncharacterized protein from Sinorhizobium fredii (strain NBRC 101917 / NGR234).